The primary structure comprises 405 residues: Diaminohydroxyphosphoribosylamino-pyrimidine deaminase (405 aa).

The CMP/dCMP-type deaminase domain occupies 256–383 (YNHEEYMLKA…DLLKKAGIVV (128 aa)). Histidine 305 is a Zn(2+) binding site. The active-site Proton donor is glutamate 307. Zn(2+)-binding residues include cysteine 335 and cysteine 345.

The protein belongs to the cytidine and deoxycytidylate deaminase family. The cofactor is Zn(2+).

It localises to the cytoplasm. The protein localises to the nucleus. It carries out the reaction 2,5-diamino-6-hydroxy-4-(5-phosphoribosylamino)-pyrimidine + H2O + H(+) = 5-amino-6-(5-phospho-D-ribosylamino)uracil + NH4(+). Its pathway is cofactor biosynthesis; riboflavin biosynthesis; 5-amino-6-(D-ribitylamino)uracil from GTP: step 2/4. In terms of biological role, involved in riboflavin biosynthesis. Converts 2,5-diamino-6-(ribosylamino)-4(3H)-pyrimidinone 5'-phosphate into 5-amino-6-(ribosylamino)-2,4(1H,3H)-pyrimidinedione 5'-phosphate. In Schizosaccharomyces pombe (strain 972 / ATCC 24843) (Fission yeast), this protein is Diaminohydroxyphosphoribosylamino-pyrimidine deaminase.